The sequence spans 1276 residues: cGMP-specific 3',5'-cyclic phosphodiesterase (1276 aa).

Disordered regions lie at residues 1-76 (MHEL…TAAG), 91-185 (NQVK…QQDV), and 241-260 (ASPT…SASS). Low complexity-rich tracts occupy residues 12–47 (SSSS…SSAS) and 57–76 (TSTA…TAAG). The segment covering 109–124 (APYPPVPAAKPKPTPT) has biased composition (pro residues). The span at 129–140 (SKFKSTSREVDV) shows a compositional bias: basic and acidic residues. The span at 147 to 166 (ARSSTISPGVSIHTQTIQQE) shows a compositional bias: polar residues. 2 stretches are compositionally biased toward low complexity: residues 167–180 (SSSA…SSSS) and 249–260 (SPRSLSNSSASS). GAF domains lie at 290–442 (DIDV…GIGI) and 474–658 (NLEC…GLGI). The PDEase domain maps to 688–1119 (SQDQTEKLTQ…RNWQDLAEKV (432 aa)). His764 (proton donor) is an active-site residue. His768, His804, Asp805, and Asp1023 together coordinate a divalent metal cation. Disordered stretches follow at residues 1162-1193 (AQHG…TGAL) and 1205-1276 (LYNS…CSLL). Composition is skewed to basic and acidic residues over residues 1171–1180 (DDSHTPEHQR) and 1221–1233 (LESH…DDKS). The span at 1248–1263 (GRMSASSSTSSAGTVV) shows a compositional bias: low complexity. A compositionally biased stretch (basic residues) spans 1266 to 1276 (SKKRSKLCSLL). Residue Cys1273 is modified to Cysteine methyl ester. Cys1273 carries S-farnesyl cysteine lipidation. Positions 1274–1276 (SLL) are cleaved as a propeptide — removed in mature form.

It belongs to the cyclic nucleotide phosphodiesterase family. In terms of assembly, interacts with PrBP. A divalent metal cation is required as a cofactor.

The protein resides in the cell membrane. The enzyme catalyses 3',5'-cyclic GMP + H2O = GMP + H(+). In terms of biological role, has a role regulating cGMP transport in Malpighian tubule principal cells. This Drosophila persimilis (Fruit fly) protein is cGMP-specific 3',5'-cyclic phosphodiesterase.